Consider the following 445-residue polypeptide: Phosphoglucosamine mutase (445 aa).

S102 acts as the Phosphoserine intermediate in catalysis. Residues S102, D241, D243, and D245 each contribute to the Mg(2+) site. Position 102 is a phosphoserine (S102).

It belongs to the phosphohexose mutase family. It depends on Mg(2+) as a cofactor. Post-translationally, activated by phosphorylation.

The catalysed reaction is alpha-D-glucosamine 1-phosphate = D-glucosamine 6-phosphate. Its function is as follows. Catalyzes the conversion of glucosamine-6-phosphate to glucosamine-1-phosphate. The protein is Phosphoglucosamine mutase of Escherichia coli O81 (strain ED1a).